The chain runs to 433 residues: Probable M18 family aminopeptidase 2 (433 aa).

Zn(2+) contacts are provided by H84, H161, and H409.

It belongs to the peptidase M18 family. Requires Zn(2+) as cofactor.

This Clostridium novyi (strain NT) protein is Probable M18 family aminopeptidase 2.